The sequence spans 405 residues: Scramblase ANY1 (405 aa).

The Cytoplasmic portion of the chain corresponds to 1 to 51; the sequence is MSTTGPLDATLIRDVAVATATKASYDMSDTLYSYLPKVDQFYIPEWLTMQF. A helical transmembrane segment spans residues 52-72; sequence IANNLISFTPLFSYGTTIISI. The Lumenal portion of the chain corresponds to 73-76; the sequence is EKCK. Residues 77–97 form a helical membrane-spanning segment; the sequence is TALGFSIDICATMLIASILRI. Topologically, residues 98–103 are cytoplasmic; it reads SYYLIT. The chain crosses the membrane as a helical span at residues 104 to 124; sequence PYEITLLRQSLVMIFIQLILL. Topologically, residues 125-177 are lumenal; it reads RTSLKYRPDEYKYQNLTDVESLSHLIHDIWFEFFSCINRPKFLSEDWKNLIKS. Residues 178–198 traverse the membrane as a helical segment; that stretch reads LSFTNLLKFSFKIFLAFFYKI. The Cytoplasmic portion of the chain corresponds to 199–223; sequence LKFFDPNFKRIGAFWQWDDDKNFWR. Residues 224-244 form a helical membrane-spanning segment; sequence FLALFATVQILVTFFISNILN. Residues 245–254 are Lumenal-facing; it reads WDSLAQGLGS. In terms of domain architecture, PQ-loop spans 252–309; sequence LGSIIGSLGLLVESLLPLPQIAILYKLKSVQGFKLILLVSWLCGDTLKITYLIFGAKN. The chain crosses the membrane as a helical span at residues 255–275; it reads IIGSLGLLVESLLPLPQIAIL. Residues 276-283 lie on the Cytoplasmic side of the membrane; it reads YKLKSVQG. Residues 284-306 traverse the membrane as a helical segment; the sequence is FKLILLVSWLCGDTLKITYLIFG. At 307 to 312 the chain is on the lumenal side; sequence AKNISA. Residues 313 to 335 form a helical membrane-spanning segment; it reads LFVIFALFQMSLDFYIGGQYIYY. Residues 336–405 are Cytoplasmic-facing; that stretch reads RYYYPKLRHQ…GKSQAQAVTL (70 aa). The interval 379-405 is disordered; sequence LKQDSNDTSDSPQDDQVGKSQAQAVTL. Residues 396–405 show a composition bias toward polar residues; it reads GKSQAQAVTL.

As to quaternary structure, interacts with NEO1.

It is found in the golgi apparatus membrane. Its subcellular location is the late endosome membrane. Functionally, phospholipid scramblase that transports phosphatidylserine (PS) and phosphatidylethalonamine (PE) bidirectionally from one leaflet to the other of the phospholipid bilayer to at least partially collapse the membrane asymmetry established by NEO1 and other flippases. The PS scramblase activity has been disputed. Functions in the trafficking pathway from endosomes to the trans-Golgi network (TGN). The polypeptide is Scramblase ANY1 (Saccharomyces cerevisiae (strain ATCC 204508 / S288c) (Baker's yeast)).